Consider the following 338-residue polypeptide: Glycerol-3-phosphate dehydrogenase [NAD(P)+] (338 aa).

S13, W14, and K108 together coordinate NADPH. Positions 108, 139, and 141 each coordinate sn-glycerol 3-phosphate. A143 serves as a coordination point for NADPH. Residues K194, D247, S257, R258, and N259 each contribute to the sn-glycerol 3-phosphate site. Catalysis depends on K194, which acts as the Proton acceptor. Position 258 (R258) interacts with NADPH. 2 residues coordinate NADPH: V282 and E284.

This sequence belongs to the NAD-dependent glycerol-3-phosphate dehydrogenase family.

The protein resides in the cytoplasm. It carries out the reaction sn-glycerol 3-phosphate + NAD(+) = dihydroxyacetone phosphate + NADH + H(+). It catalyses the reaction sn-glycerol 3-phosphate + NADP(+) = dihydroxyacetone phosphate + NADPH + H(+). It participates in membrane lipid metabolism; glycerophospholipid metabolism. Its function is as follows. Catalyzes the reduction of the glycolytic intermediate dihydroxyacetone phosphate (DHAP) to sn-glycerol 3-phosphate (G3P), the key precursor for phospholipid synthesis. The sequence is that of Glycerol-3-phosphate dehydrogenase [NAD(P)+] from Streptococcus pneumoniae (strain JJA).